The primary structure comprises 501 residues: L-arabinose isomerase (501 aa).

Residues Glu-306, Glu-333, His-350, and His-449 each contribute to the Mn(2+) site.

The protein belongs to the arabinose isomerase family. Requires Mn(2+) as cofactor.

The enzyme catalyses beta-L-arabinopyranose = L-ribulose. It participates in carbohydrate degradation; L-arabinose degradation via L-ribulose; D-xylulose 5-phosphate from L-arabinose (bacterial route): step 1/3. Catalyzes the conversion of L-arabinose to L-ribulose. The chain is L-arabinose isomerase from Herpetosiphon aurantiacus (strain ATCC 23779 / DSM 785 / 114-95).